Here is a 352-residue protein sequence, read N- to C-terminus: Homocitrate synthase, omega subunit (352 aa).

It belongs to the alpha-IPM synthase/homocitrate synthase family. As to quaternary structure, heterodimer of an alpha and an omega chain.

The enzyme catalyses acetyl-CoA + 2-oxoglutarate + H2O = (2R)-homocitrate + CoA + H(+). Its function is as follows. This protein is a Fe-Mo-cofactor biosynthetic component. The sequence is that of Homocitrate synthase, omega subunit (nifV-OMEGA) from Clostridium pasteurianum.